We begin with the raw amino-acid sequence, 474 residues long: MLSKIELMLLRSLETGKTYTPEEAAELSGLSKDAVLKAAYMLQERGYVRVIENVRTHYSLTEEGERYLKEGLPEEKLYSLVKSGVNSMDELRKRMGREFQIALGWLRRKGAVEVEGDKVVPKREPSFDERAALQAIKEGRGVDEGTLKTLMKRKLVTKSETKQVYIEVMKKPEIELEDIITDLTPEMLLEGTWRGKQFLKYDITIPAKEIYGGKIHPYERIIEECRKVFLEMGFTEIKGHYVQPAFWNFDALFQPQDHPARDMQDTFYLDRYIDLEGEIVERVKATHENGWITGSTGWGGEWSLEKARQLVLRTHTTAITIHYLAENPEPPQKAFCIDRVYRRETIDATHLPEFDQLEGVVLDRDVGFKHLLGLLKEFFTKMGFEDVRFRPGYFPYTEPSVEPEVYVEGLGWVELGGAGVFRKEVTEPLGIRGKVLAWGLGIGRLAMLKIGLKDLRRLYLPDLGWLRSMPVARK.

Residues Thr317, 356-358, and Tyr396 contribute to the L-phenylalanine site; that span reads QLE. Position 398 (Glu398) interacts with Mg(2+). Phe421 provides a ligand contact to L-phenylalanine.

This sequence belongs to the class-II aminoacyl-tRNA synthetase family. Phe-tRNA synthetase alpha subunit type 2 subfamily. Tetramer of two alpha and two beta subunits. Requires Mg(2+) as cofactor.

The protein resides in the cytoplasm. It carries out the reaction tRNA(Phe) + L-phenylalanine + ATP = L-phenylalanyl-tRNA(Phe) + AMP + diphosphate + H(+). The chain is Phenylalanine--tRNA ligase alpha subunit from Archaeoglobus fulgidus (strain ATCC 49558 / DSM 4304 / JCM 9628 / NBRC 100126 / VC-16).